Reading from the N-terminus, the 217-residue chain is MDDAFTVDDLIACYARGVFPMADAREDESLFLIDPERRGVLPLGTFHIPKRLARTVRNGPYEVRVDTAFDTVIENCAASRPGRLDTWINHPIQRLYGQLYARGLAHSVETWLGDELVGGLYGVSLGGAFFGESMFSTARDASKVALVHLVARLIAGGYELLDTQFLTEHLAQFGVMEISRADYRRRLSKALATPGDFYGLAAGATGIDCLQAISQAS.

The protein belongs to the L/F-transferase family.

It is found in the cytoplasm. It catalyses the reaction N-terminal L-lysyl-[protein] + L-leucyl-tRNA(Leu) = N-terminal L-leucyl-L-lysyl-[protein] + tRNA(Leu) + H(+). It carries out the reaction N-terminal L-arginyl-[protein] + L-leucyl-tRNA(Leu) = N-terminal L-leucyl-L-arginyl-[protein] + tRNA(Leu) + H(+). The catalysed reaction is L-phenylalanyl-tRNA(Phe) + an N-terminal L-alpha-aminoacyl-[protein] = an N-terminal L-phenylalanyl-L-alpha-aminoacyl-[protein] + tRNA(Phe). Functionally, functions in the N-end rule pathway of protein degradation where it conjugates Leu, Phe and, less efficiently, Met from aminoacyl-tRNAs to the N-termini of proteins containing an N-terminal arginine or lysine. This is Leucyl/phenylalanyl-tRNA--protein transferase from Caulobacter vibrioides (strain ATCC 19089 / CIP 103742 / CB 15) (Caulobacter crescentus).